Here is a 396-residue protein sequence, read N- to C-terminus: MAEVNVRNFNINFGPQHPAAHGVLRMVLELDGEVVERVDPHIGLLHRGTEKLMETKTYLQAVPYLDRLDYVAPMNQEHAFVLAIEKLLGVEVPKRGQLIRVLFSEIGRILNHLLNVTTQAMDVGALTPPLWGFEQRERLMIFYERACGARLHANYFRPGGVHQDLPESLIEDIGHFIDPFLISLSRLDALVTPNRIFKQRNVDIGVISIDEAWVRGFSGVMIRGAGVPWDLRKSQPYECYDEMEFDIPVGKNSDCYDRYLIRMEEMRQSARIMRQCVDRLLGSEKNGPVSSLNRKVVPPKRSEMKSSMEALIHHFKLYTEGFHTPPGEVYVAVEAPKGEFGVYLISDGTNKPYRVKLRAPGFAHLQAMDFLTRGHMLADATAILGSIDIVFGEVDR.

This sequence belongs to the complex I 49 kDa subunit family. NDH-1 is composed of 14 different subunits. Subunits NuoB, C, D, E, F, and G constitute the peripheral sector of the complex.

It is found in the cell inner membrane. It carries out the reaction a quinone + NADH + 5 H(+)(in) = a quinol + NAD(+) + 4 H(+)(out). In terms of biological role, NDH-1 shuttles electrons from NADH, via FMN and iron-sulfur (Fe-S) centers, to quinones in the respiratory chain. The immediate electron acceptor for the enzyme in this species is believed to be ubiquinone. Couples the redox reaction to proton translocation (for every two electrons transferred, four hydrogen ions are translocated across the cytoplasmic membrane), and thus conserves the redox energy in a proton gradient. The chain is NADH-quinone oxidoreductase subunit D from Bartonella quintana (strain Toulouse) (Rochalimaea quintana).